An 870-amino-acid chain; its full sequence is Increased rDNA silencing protein 4 (870 aa).

Basic residues predominate over residues 1 to 11 (MHMRLNKRRRN). Disordered regions lie at residues 1 to 25 (MHMR…QDAK), 38 to 57 (RHAD…DSAG), 62 to 92 (QADT…MHKV), 147 to 260 (IRTT…PSNM), 275 to 315 (GRKN…PSPI), 516 to 579 (YLGN…SSSY), and 717 to 738 (DDSA…LSDG). Residues 75–86 (PSGTSSSHNSGN) show a composition bias toward polar residues. The span at 155–166 (QDKKRRDIENAH) shows a compositional bias: basic and acidic residues. The span at 167 to 181 (HAASAAAVTSSNLAV) shows a compositional bias: low complexity. The span at 184–208 (PPSQYIPSVPTLNVTSPQMRNSSQN) shows a compositional bias: polar residues. A compositionally biased stretch (basic and acidic residues) spans 209–227 (IDRRSKSNEEAHNGHEKMM). Over residues 228–237 (NSRSNSINSS) the composition is skewed to low complexity. The segment covering 238-259 (TIKGSVSEPNTVTPLRQNSPSN) has biased composition (polar residues). Residues 299 to 310 (RPMRTPSGRRVR) show a composition bias toward basic residues. The span at 532-548 (IDDDDDDDDYDSAYEDL) shows a compositional bias: acidic residues. Residues 549 to 566 (DYSRDDSEAMYKGDRESS) show a composition bias toward basic and acidic residues. 2 stretches are compositionally biased toward low complexity: residues 567-579 (NPRS…SSSY) and 720-730 (ASNLNSNASTN). The EH domain occupies 739–828 (DNEEDDVTRF…PKIWDSVDRW (90 aa)).

This sequence belongs to the IRS4 family.

Positive regulator of phosphatidylinositol 4,5-bisphosphate turnover and negatively regulates signaling through the cell integrity pathway. Involved in rDNA silencing. The protein is Increased rDNA silencing protein 4 (IRS4) of Candida glabrata (strain ATCC 2001 / BCRC 20586 / JCM 3761 / NBRC 0622 / NRRL Y-65 / CBS 138) (Yeast).